The chain runs to 166 residues: Pyruvoyl-dependent arginine decarboxylase (166 aa).

At Ser45 the chain carries Pyruvic acid (Ser).

The protein belongs to the PdaD family. Pyruvate serves as cofactor.

It catalyses the reaction L-arginine + H(+) = agmatine + CO2. In Methanocella arvoryzae (strain DSM 22066 / NBRC 105507 / MRE50), this protein is Pyruvoyl-dependent arginine decarboxylase.